A 105-amino-acid polypeptide reads, in one-letter code: MAFIKSLLIASVAAVAFAAPQGGASDNNKKVEIDGQDSAPVCGNGQKVACCNSGEDLIGLNCLSIPILAIPIQKACGSNIAACCQTGDSEGNLLNLEANCLAIPL.

A signal peptide spans 1–18; the sequence is MAFIKSLLIASVAAVAFA. 4 disulfides stabilise this stretch: cysteine 42/cysteine 83, cysteine 50/cysteine 76, cysteine 51/cysteine 62, and cysteine 84/cysteine 100.

It belongs to the fungal hydrophobin family. Self-assembles to form functional amyloid fibrils called rodlets. Self-assembly into fibrillar rodlets occurs spontaneously at hydrophobic:hydrophilic interfaces and the rodlets further associate laterally to form amphipathic monolayers.

The protein localises to the secreted. Its subcellular location is the cell wall. In terms of biological role, aerial growth, conidiation, and dispersal of filamentous fungi in the environment rely upon a capability of their secreting small amphipathic proteins called hydrophobins (HPBs) with low sequence identity. Class I can self-assemble into an outermost layer of rodlet bundles on aerial cell surfaces, conferring cellular hydrophobicity that supports fungal growth, development and dispersal; whereas Class II form highly ordered films at water-air interfaces through intermolecular interactions but contribute nothing to the rodlet structure. This is Class I hydrophobin 1 from Davidiella tassiana (Mycosphaerella tassiana).